The following is a 97-amino-acid chain: Non-pathogenic pore-forming peptide amoebapore A (97 aa).

A signal peptide spans 1–20 (MKAIVFVLIFAVAFAVTLRQ). In terms of domain architecture, Saposin B-type spans 21 to 97 (GPIVCNLCTG…NAICAKIHAC (77 aa)). Cystine bridges form between Cys25/Cys97, Cys28/Cys91, and Cys55/Cys66.

As to quaternary structure, monomer. Homodimer. Hexamer; formed during insertion in the membrane.

The protein resides in the cytoplasmic granule. Its function is as follows. Forms pores in the cell membrane of host cells. Implicated in the cytolytic activity of the parasite. Pore forming activity is lower compared to the activity of ameobapore A from the pathogenic strain HM-1:IMSS. The sequence is that of Non-pathogenic pore-forming peptide amoebapore A from Entamoeba histolytica.